The following is a 121-amino-acid chain: Small ribosomal subunit protein uS13 (121 aa).

The tract at residues 93–121 (RGLPMRGQRTRTNARTRKGPRKAAQSLKK) is disordered.

It belongs to the universal ribosomal protein uS13 family. Part of the 30S ribosomal subunit. Forms a loose heterodimer with protein S19. Forms two bridges to the 50S subunit in the 70S ribosome.

Located at the top of the head of the 30S subunit, it contacts several helices of the 16S rRNA. In the 70S ribosome it contacts the 23S rRNA (bridge B1a) and protein L5 of the 50S subunit (bridge B1b), connecting the 2 subunits; these bridges are implicated in subunit movement. Contacts the tRNAs in the A and P-sites. This chain is Small ribosomal subunit protein uS13, found in Variovorax paradoxus (strain S110).